A 365-amino-acid chain; its full sequence is tRNA/tmRNA (uracil-C(5))-methyltransferase (365 aa).

The S-adenosyl-L-methionine site is built by glutamine 189, tyrosine 217, asparagine 222, glutamate 238, and aspartate 298. Residue cysteine 323 is the Nucleophile of the active site. Glutamate 357 (proton acceptor) is an active-site residue.

The protein belongs to the class I-like SAM-binding methyltransferase superfamily. RNA M5U methyltransferase family. TrmA subfamily.

It catalyses the reaction uridine(54) in tRNA + S-adenosyl-L-methionine = 5-methyluridine(54) in tRNA + S-adenosyl-L-homocysteine + H(+). The catalysed reaction is uridine(341) in tmRNA + S-adenosyl-L-methionine = 5-methyluridine(341) in tmRNA + S-adenosyl-L-homocysteine + H(+). Its function is as follows. Dual-specificity methyltransferase that catalyzes the formation of 5-methyluridine at position 54 (m5U54) in all tRNAs, and that of position 341 (m5U341) in tmRNA (transfer-mRNA). The sequence is that of tRNA/tmRNA (uracil-C(5))-methyltransferase from Pasteurella multocida (strain Pm70).